A 199-amino-acid polypeptide reads, in one-letter code: Ribonuclease P protein subunit p25 (199 aa).

Positions methionine 1–glutamate 11 are enriched in basic and acidic residues. Disordered regions lie at residues methionine 1–leucine 31 and proline 146–alanine 199. Residue serine 172 is modified to Phosphoserine. A compositionally biased stretch (acidic residues) spans proline 190 to alanine 199.

This sequence belongs to the histone-like Alba family. Component of nuclear RNase P and RNase MRP ribonucleoproteins. RNase P consists of a catalytic RNA moiety and 10 different protein chains; POP1, POP4, POP5, POP7, RPP14, RPP21, RPP25, RPP30, RPP38 and RPP40. Within the RNase P complex, POP1, POP7 and RPP25 form the 'finger' subcomplex, POP5, RPP14, RPP40 and homodimeric RPP30 form the 'palm' subcomplex, and RPP21, POP4 and RPP38 form the 'wrist' subcomplex. All subunits of the RNase P complex interact with the catalytic RNA. Several subunits of RNase P are also part of the RNase MRP complex. RNase MRP consists of a catalytic RNA moiety and about 8 protein subunits; POP1, POP7, RPP25, RPP30, RPP38, RPP40 and possibly also POP4 and POP5. POP7 forms a heterodimer with RPP25 that binds to the P3 stem loop of the catalytic RNA.

Its subcellular location is the nucleus. The protein resides in the nucleolus. Component of ribonuclease P, a ribonucleoprotein complex that generates mature tRNA molecules by cleaving their 5'-ends. Also a component of the MRP ribonuclease complex, which cleaves pre-rRNA sequences. This is Ribonuclease P protein subunit p25 (Rpp25) from Rattus norvegicus (Rat).